A 1072-amino-acid chain; its full sequence is Rho family-interacting cell polarization regulator 2 (1072 aa).

Residues 83 to 112 are a coiled coil; the sequence is NGLDEYLEVHQTELDKLTAQLKDMRRNSRL. The necessary for interaction with NCAM and myoblast protrusion formation stretch occupies residues 173–470; the sequence is RESLTEINRS…ATTATQHRAR (298 aa). 2 disordered regions span residues 439 to 465 and 683 to 718; these read DRVPPANSAEPSSAHVTSSPDIATTAT and EVEKNSYRTEHPEARGHLQRSLTEDTGVGTSVAGSP. Residues 447-460 are compositionally biased toward polar residues; sequence AEPSSAHVTSSPDI. A compositionally biased stretch (basic and acidic residues) spans 683 to 698; sequence EVEKNSYRTEHPEARG.

Belongs to the RIPOR family. Homooligomer; homooligomerization is regulated by RHOC and leads to the formation of concatemers through the association of N- and C-termini. Interacts with NCAM; this interaction is necessary for myoblast protrusion formation. In terms of tissue distribution, expressed in myoblast and myotubes (at protein level). Expressed in brain, eyes and skeletal muscle.

It localises to the cytoplasm. It is found in the cytoskeleton. The protein localises to the cell projection. The protein resides in the filopodium. Its subcellular location is the apical cell membrane. It localises to the stereocilium. It is found in the stereocilium membrane. In terms of biological role, acts as an inhibitor of the small GTPase RHOA and plays several roles in the regulation of myoblast and hair cell differentiation, lymphocyte T proliferation and neutrophil polarization. Plays a role in fetal mononuclear myoblast differentiation by promoting filopodia and myotube formation. Maintains naive T lymphocytes in a quiescent state and prevents chemokine-induced T lymphocyte responses, such as cell adhesion, polarization and migration. Involved also in the regulation of neutrophil polarization, chemotaxis and adhesion. Required for normal development of inner and outer hair cell stereocilia within the cochlea of the inner ear. Plays a role for maintaining the structural organization of the basal domain of stereocilia. Involved in mechanosensory hair cell function. Required for normal hearing. The chain is Rho family-interacting cell polarization regulator 2 from Coturnix japonica (Japanese quail).